The primary structure comprises 781 residues: ATP-dependent RNA helicase rok1 (781 aa).

Disordered regions lie at residues 7–108 and 134–177; these read LSRG…KPKL and QDEA…IYPQ. The span at 48-57 shows a compositional bias: basic residues; sequence KRGKKRKRKG. A compositionally biased stretch (acidic residues) spans 66 to 75; that stretch reads SGDEDDDASD. Basic and acidic residues-rich tracts occupy residues 84 to 108 and 139 to 173; these read TPEELAAKKDAELKADEPKKQKPKL and TEEKPPKKQKKQKEDRKKQEEEEKKKKKKDEDKKQ. Positions 184–212 match the Q motif motif; that stretch reads ELKYTYGIHPVLADNITRQGFRVPTEVQM. Residues 233-487 enclose the Helicase ATP-binding domain; the sequence is DVKVEKGIDF…TKHIDKRAKR (255 aa). ATP is bound at residue 246 to 253; sequence APTGSGKT. Residues 323–386 form a disordered region; that stretch reads ESNEQEETEQ…SRAKGDQKFK (64 aa). The span at 339–369 shows a compositional bias: acidic residues; it reads QDSDSDSEAESEPEEVMKIDEEEEEEEESDS. A compositionally biased stretch (basic and acidic residues) spans 370–386; that stretch reads DAEKKTESRAKGDQKFK. The DEAD box motif lies at 434 to 437; that stretch reads DEAD. The Helicase C-terminal domain occupies 527 to 689; sequence ALRQLLHPVS…GKDIDEKDTV (163 aa). Positions 718-781 are disordered; it reads RGVESRRTGG…KAEEEWTGLD (64 aa). Residues 736 to 752 show a composition bias toward basic and acidic residues; the sequence is SWERRRENNRREAIEAS.

This sequence belongs to the DEAD box helicase family. DDX52/ROK1 subfamily. Interacts with the U3 snoRNA and is associated with the 90S and 40S pre-ribosomes.

The protein resides in the nucleus. Its subcellular location is the nucleolus. It carries out the reaction ATP + H2O = ADP + phosphate + H(+). In terms of biological role, ATP-dependent RNA helicase involved in 40S ribosomal subunit biogenesis. Required for the processing and cleavage of 35S pre-rRNA at sites A0, A1, and A2, leading to mature 18S rRNA. This is ATP-dependent RNA helicase rok1 (drh-16) from Neurospora crassa (strain ATCC 24698 / 74-OR23-1A / CBS 708.71 / DSM 1257 / FGSC 987).